The chain runs to 1889 residues: MAAAAAAAAVGDPQPPQPEAPAQGLALDKAATAAHLKAALSRPDNRAGAEELQALLERVLNAERPLAGAAGGEEAAGGGGGGPGEAEEDALEWCKCLLAGGGGYEEFCAAVRAYDPAALCGLVWTANFVAYRCRTCGISPCMSLCAECFHQGDHTGHDFNMFRSQAGGACDCGDSNVMRESGFCRRHQIKSSSNIPCVPKDLLMMSEFVLPRFIFCLIQYLREGYNEPAADAPSEKDLNKVLQLLEPQISFLEDLTKMGGAMRSVLTQVLTNQQNYKDLTAGLGENACAKKSHEKYLIALKSSGLTYPEDKLVYGVQEPAAGTSTLAAQGFAGATGTLGQIDSSDEEDQDGSQGLGKRKRVKLSSGTKDQSIMDVLKHKSFLEELLFWTIKYEFPQKMVTFLLNMLPDQEYKVAFTKTFVQHYAFIMKTLKKSHESDTMSNRIVHISVQLFSNEELARQVTEECQLLDIMVTVLLYMMESCLIKSELQDEENSLHVVVNCGEALLKNNTYWPLVSDFINILSHQSVAQRFLEDHGLLVTWMNFVSFFQGMNLNKRELNEHVEFESQTYYAAFAAELEACAQPMWGLLSHCKVRETQEYTRNVVRYCLEALQDWFDAINFVDEPAPNQVTFHLPLHRYYAMFLSKAVKCQELDLDSLLPDQEMLMKLMIHPLQIQASLAEIHSNMWVRNGLQIKGQAMTYVQSHFCNSMIDPDIYLLQVCASRLDPDYFISSVFERFKVVDLLTMASQHHNMVLDVEHERSMLEGALTFLVILLSLRLHLGMSDDDILRAEMVAQLCMNDRTHSSLLDLIPENPNPKSGIIPGSYSFESVLSAVADFRAPIFEPGGSMQQGMYTPKAEVWDQEFDPVMVILRTVYRRDVQSAMDRYTAFLKQSGKFPGNPWPPYKKRTSLHPSYKGLMRLLHCKTLHIVLFTLLYKILMDHQNLSEHVLCMVLYLIELGLENSADDDSEEEVSMGGPERCHDSWFPGSNLVSNMRHFINYVRVRVPETAPELKRDPLASTSSDALDSLQNSGTAQVFSLVAERRKKFQEIINRSNSEANQVVRPKIPSKWSAPGSSPQLTTAILEIKESILSLLIKLHHKLSGKQNSYYPPWLDDIEVLIQPEIPKYNHGDGITAVERILLKAAVQSRMNKRIIEEICRKVTPPVPPKKITAAEKKTLDKEERRQKARERQQKLLAEFASRQKSFMETAMDVDSPENDIPMEITTAEPQVSEAVYDCVICGQSGPSSEDRPTGLVVLLQASSVLGQCRDNAEPKKLPIAEEEQIYPWDTCAAVHDVRLSLLQRYFKDSSCLLAVSIGWEGGVYVQTCGHTLHIDCHKSYMESLRNDQVLQGFSVDKGEFTCPLCRQFANSVLPCYPGSNVENNLWQRPCNKSTQDLIKEVEELQGRPGAFPSETNLSKEMESVMKDIKNTTQKKYRDYSKTPGSPDNEFLFMYSVARTNLELELIHRGGSLCSGGPSTAGKRSCLNQLFHVLALHMRLYTIDSEYNPWKKLTQLVEDMNSQVGNEDQQPEVPILYHDVTSLLLIQILMMPQPLRKEHFTCIVKVLFTLLYTQALAALSVKGTEEDRSAWKHAGALRKDTCDAEKCYEVLLSFVISELSKGKLYYEEGAQECAMVSPIAWSPESMERYIQDFCLPFLRVSSLLQHHLFGEDLPSCQEEEEFSVLASCLGLLPTFYQTDHPFISASCLDWPVAAFDIITQWCFEITSFTERHAEQGKALLIQESRWKLPHLLQLPENYNTIFQYYHRKTCSVCTKVPKDPAVCLVCGTFVCLKGLCCKQQSYCECVLHSQNCGAGTGIFLLINASVIIIIRGHRFCLWGSVYLDAHGEEDRDLRRGKPLYICEERYRVLEQQWVSHTFDHINKRWGPHYNGL.

Positions 1-27 (MAAAAAAAAVGDPQPPQPEAPAQGLAL) are disordered. The UBR-type zinc-finger motif lies at 118-189 (ALCGLVWTAN…ESGFCRRHQI (72 aa)). The tract at residues 338–362 (LGQIDSSDEEDQDGSQGLGKRKRVK) is disordered. S343 and S344 each carry phosphoserine. Transmembrane regions (helical) follow at residues 761-781 (MLEGALTFLVILLSLRLHLGM) and 919-939 (LLHCKTLHIVLFTLLYKILMD). Residues 1167–1199 (KKITAAEKKTLDKEERRQKARERQQKLLAEFAS) adopt a coiled-coil conformation. S1199 is modified (phosphoserine). The RING-type; degenerate zinc-finger motif lies at 1306–1364 (DSSCLLAVSIGWEGGVYVQTCGHTLHIDCHKSYMESLRNDQVLQGFSVDKGEFTCPLCR). Residues 1807–1827 (QNCGAGTGIFLLINASVIIII) traverse the membrane as a helical segment.

This sequence belongs to the E3 ubiquitin-protein ligase UBR1-like family. As to quaternary structure, interacts with UBE2A and UBE2B. As to expression, expressed in numerous cells of the smell, touch, vision, hearing and taste senses. Expressed in cells of the olfactory pathway, including the olfactory cell layer of the main olfactory epithelium (MOE), a mitral neuron cell layer of the olfactory bulb (OB), and a pyramidal cell layer of the piriform cortex of the olfactory cortex (OC). Expressed in the vomeronasal sensory epithelium of the vomeronasal organ (VNO) and the mitral cells of the accessory olfactory bulb. Expressed in tactile tissues, including the dorsal root ganglion, trigeminal ganglion and follicle-sinus complexes. Expressed in cells between hair follicle and sinus and also in the region of the rete ridge collar. Expressed in taste buds of the fungiform, circumvallate, and foliate papillae. Expressed in the spiral ganglion, the organ of Corti of the cochlea in the inner ear, in the sensory epithelium of macula and vestibular ganglion of the balancing system (at protein level). Expressed in the liver and skeletal muscle.

Its subcellular location is the membrane. It catalyses the reaction S-ubiquitinyl-[E2 ubiquitin-conjugating enzyme]-L-cysteine + [acceptor protein]-L-lysine = [E2 ubiquitin-conjugating enzyme]-L-cysteine + N(6)-ubiquitinyl-[acceptor protein]-L-lysine.. It functions in the pathway protein modification; protein ubiquitination. E3 ubiquitin-protein ligase which is a component of the N-end rule pathway. Does not bind to proteins bearing specific N-terminal residues that are destabilizing according to the N-end rule, leading to their ubiquitination and subsequent degradation. May play a role in Shh signaling by mediating the ubiquitination of Kif7. May be important for MYH9 function in certain tissues, possibly by regulating the ubiquitination of MYH9 and consequently affecting its interaction with MYO7A. This chain is E3 ubiquitin-protein ligase UBR3 (Ubr3), found in Mus musculus (Mouse).